Here is a 678-residue protein sequence, read N- to C-terminus: Mitogen-activated protein kinase kinase kinase 7 (678 aa).

The 253-residue stretch at 19-271 (ITLREKVGHG…YIVGVMHEIV (253 aa)) folds into the Protein kinase domain. ATP contacts are provided by residues 25–33 (VGHGSYGVV) and Lys-46. Residue Asp-140 is the Proton acceptor of the active site. Disordered stretches follow at residues 296-322 (DGTVAAQPDSLSSQEGELSPSSTQLTP), 339-365 (TTSSMTENTSSTSSDITPTNSGQLDNN), 431-455 (DLSPSESSSSSTNAKSDGRERLTVT), and 616-647 (QLAAGHHPQPHPHPHPNQLQHPHSHPPMHFLQ). Low complexity-rich tracts occupy residues 313–322 (LSPSSTQLTP) and 339–352 (TTSSMTENTSSTSS). The span at 353–364 (DITPTNSGQLDN) shows a compositional bias: polar residues.

The protein belongs to the protein kinase superfamily. STE Ser/Thr protein kinase family. MAP kinase kinase kinase subfamily. Requires Mg(2+) as cofactor.

The enzyme catalyses L-seryl-[protein] + ATP = O-phospho-L-seryl-[protein] + ADP + H(+). The catalysed reaction is L-threonyl-[protein] + ATP = O-phospho-L-threonyl-[protein] + ADP + H(+). In terms of biological role, component of a protein kinase signal transduction cascade. Mediator of TGF-beta signal transduction. Responsible for activation of the JNK MAPK pathway (basket, bsk and hemipterous, hep) in response to LPS. Component of the NF-kappa-B pathway; relish-mediated JNK inhibition involves proteasomal degradation of Tak1; certain targets of Relish that are induced during immune responses may facilitate destruction of Tak1 and switch off the JNK cascade. Participates in diverse roles such as control of cell shape and regulation of apoptosis. The sequence is that of Mitogen-activated protein kinase kinase kinase 7 (Tak1) from Drosophila melanogaster (Fruit fly).